Here is a 624-residue protein sequence, read N- to C-terminus: Plastin-2 (624 aa).

EF-hand domains follow at residues 9–44 (EEMEELREAFTKVDVDGNGHISTDELNALFKAANLP) and 49–84 (RVREIIQEISRTMDLNQDGKITFDEFAKVVHDLKSS). Ca(2+)-binding residues include D22, D24, N26, H28, E33, D62, N64, D66, K68, and E73. Calponin-homology (CH) domains lie at 118 to 234 (EEEK…KIGL), 262 to 373 (LSPE…NKYP), 392 to 501 (TREE…RRYT), and 513 to 621 (KIID…ARGM). Actin-binding stretches follow at residues 118–373 (EEEK…NKYP) and 392–621 (TREE…ARGM).

In terms of assembly, monomer. As to expression, expressed by macrophages (at protein level).

It localises to the cytoplasm. It is found in the cytoskeleton. Its subcellular location is the cell junction. The protein localises to the cell projection. The protein resides in the ruffle membrane. Its function is as follows. Actin-binding protein. Plays a role in the activation of T-cells. This Danio rerio (Zebrafish) protein is Plastin-2.